We begin with the raw amino-acid sequence, 286 residues long: Leukocyte cell-derived chemotaxin 1 (286 aa).

Residues 29–49 form a helical membrane-spanning segment; the sequence is LVAFIAGAALLLFGGVGAFYL. The 83-residue stretch at 75–157 folds into the BRICHOS domain; it reads DSAEGTIVEV…FCADLPIYWH (83 aa). Cys102 and Cys149 are joined by a disulfide. Positions 166 to 169 are excised as a propeptide; sequence RKRR. Residues 166–176 are compositionally biased toward basic residues; the sequence is RKRRSATRMRR. A disordered region spans residues 166–220; sequence RKRRSATRMRRQTSAGVNRQPARRRNSTASARDERPTGPEYNPENPYHQNQGSEG. Asn191 is a glycosylation site (N-linked (GlcNAc...) asparagine). Intrachain disulfides connect Cys234–Cys238, Cys235–Cys275, Cys245–Cys269, and Cys249–Cys265.

Belongs to the chondromodulin-1 family. After cleavage, the post-translationally modified ChM-I is secreted as a glycoprotein.

The protein resides in the secreted. Its subcellular location is the extracellular space. The protein localises to the extracellular matrix. It is found in the endomembrane system. Functionally, bifunctional growth regulator. May contribute to the rapid growth of cartilage and vascular invasion prior to the replacement of cartilage by bone during endochondral bone development. Plays a role as antiangiogenic factor in cardiac valves to suppress neovascularization. This is Leukocyte cell-derived chemotaxin 1 from Danio rerio (Zebrafish).